A 429-amino-acid polypeptide reads, in one-letter code: Histidine--tRNA ligase (429 aa).

Belongs to the class-II aminoacyl-tRNA synthetase family. In terms of assembly, homodimer.

It is found in the cytoplasm. The enzyme catalyses tRNA(His) + L-histidine + ATP = L-histidyl-tRNA(His) + AMP + diphosphate + H(+). This is Histidine--tRNA ligase from Streptococcus pneumoniae serotype 2 (strain D39 / NCTC 7466).